We begin with the raw amino-acid sequence, 204 residues long: Methylthioribulose-1-phosphate dehydratase (204 aa).

2 residues coordinate Zn(2+): H94 and H96.

Belongs to the aldolase class II family. MtnB subfamily. Zn(2+) serves as cofactor.

The catalysed reaction is 5-(methylsulfanyl)-D-ribulose 1-phosphate = 5-methylsulfanyl-2,3-dioxopentyl phosphate + H2O. It functions in the pathway amino-acid biosynthesis; L-methionine biosynthesis via salvage pathway; L-methionine from S-methyl-5-thio-alpha-D-ribose 1-phosphate: step 2/6. Functionally, catalyzes the dehydration of methylthioribulose-1-phosphate (MTRu-1-P) into 2,3-diketo-5-methylthiopentyl-1-phosphate (DK-MTP-1-P). The protein is Methylthioribulose-1-phosphate dehydratase of Serratia proteamaculans (strain 568).